A 571-amino-acid polypeptide reads, in one-letter code: Cytosolic Fe-S cluster assembly factor NAR1 (571 aa).

[4Fe-4S] cluster-binding residues include Cys-20, Cys-62, Cys-65, Cys-68, Cys-204, and Cys-259. The disordered stretch occupies residues 415 to 437; that stretch reads AKPSRMPGGKPIGSARRPNGKAS. [4Fe-4S] cluster-binding residues include Cys-449 and Cys-453.

The protein belongs to the NARF family.

In terms of biological role, component of the cytosolic Fe/S protein assembly machinery. Required for maturation of extramitochondrial Fe/S proteins. May play a role in the transfer of pre-assembled Fe/S clusters to target apoproteins. The sequence is that of Cytosolic Fe-S cluster assembly factor NAR1 (NAR1) from Sclerotinia sclerotiorum (strain ATCC 18683 / 1980 / Ss-1) (White mold).